The sequence spans 134 residues: Protein PsiB (134 aa).

Its function is as follows. Could be involved directly or indirectly in exopolysaccharide synthesis. This Rhizobium leguminosarum bv. phaseoli protein is Protein PsiB (psiB).